Reading from the N-terminus, the 59-residue chain is Cecropin-C (59 aa).

An N-terminal signal peptide occupies residues 1-23 (MNFKLIFLVALVLMAAFLGQTEG). Val-58 is modified (valine amide).

It belongs to the cecropin family.

The protein resides in the secreted. Functionally, cecropins have lytic and antibacterial activity against several Gram-positive and Gram-negative bacteria. The sequence is that of Cecropin-C (CecC) from Anopheles gambiae (African malaria mosquito).